The following is a 164-amino-acid chain: Translation initiation factor IF-3 (164 aa).

It belongs to the IF-3 family. As to quaternary structure, monomer.

It localises to the cytoplasm. Functionally, IF-3 binds to the 30S ribosomal subunit and shifts the equilibrium between 70S ribosomes and their 50S and 30S subunits in favor of the free subunits, thus enhancing the availability of 30S subunits on which protein synthesis initiation begins. The chain is Translation initiation factor IF-3 from Bordetella bronchiseptica (strain ATCC BAA-588 / NCTC 13252 / RB50) (Alcaligenes bronchisepticus).